A 382-amino-acid polypeptide reads, in one-letter code: Type 2 DNA topoisomerase 6 subunit A (382 aa).

The 142-residue stretch at 14 to 155 (YDPQKVLKKL…MHITADRRGY (142 aa)) folds into the Topo IIA-type catalytic domain. The O-(5'-phospho-DNA)-tyrosine intermediate role is filled by Tyr-108. Residues Glu-202 and Asp-254 each contribute to the Mg(2+) site.

It belongs to the TOP6A family. Homodimer. Heterotetramer of two Top6A and two Top6B chains. Mg(2+) serves as cofactor.

It carries out the reaction ATP-dependent breakage, passage and rejoining of double-stranded DNA.. In terms of biological role, relaxes both positive and negative superturns and exhibits a strong decatenase activity. In Pyrococcus abyssi (strain GE5 / Orsay), this protein is Type 2 DNA topoisomerase 6 subunit A.